Reading from the N-terminus, the 315-residue chain is 4-diphosphocytidyl-2-C-methyl-D-erythritol kinase (315 aa).

Residue lysine 11 is part of the active site. 99–109 (PMAAGLAGGSA) contacts ATP. Aspartate 141 is an active-site residue.

This sequence belongs to the GHMP kinase family. IspE subfamily.

It carries out the reaction 4-CDP-2-C-methyl-D-erythritol + ATP = 4-CDP-2-C-methyl-D-erythritol 2-phosphate + ADP + H(+). It participates in isoprenoid biosynthesis; isopentenyl diphosphate biosynthesis via DXP pathway; isopentenyl diphosphate from 1-deoxy-D-xylulose 5-phosphate: step 3/6. Functionally, catalyzes the phosphorylation of the position 2 hydroxy group of 4-diphosphocytidyl-2C-methyl-D-erythritol. The sequence is that of 4-diphosphocytidyl-2-C-methyl-D-erythritol kinase from Synechocystis sp. (strain ATCC 27184 / PCC 6803 / Kazusa).